We begin with the raw amino-acid sequence, 202 residues long: Large ribosomal subunit protein bL9 (202 aa).

The interval 176-202 is disordered; sequence AAGEFFDPDAQHDDEPAAEDDQNAEEK. The segment covering 191 to 202 has biased composition (acidic residues); it reads PAAEDDQNAEEK.

This sequence belongs to the bacterial ribosomal protein bL9 family.

Its function is as follows. Binds to the 23S rRNA. In Nitrobacter winogradskyi (strain ATCC 25391 / DSM 10237 / CIP 104748 / NCIMB 11846 / Nb-255), this protein is Large ribosomal subunit protein bL9.